The primary structure comprises 89 residues: Small ribosomal subunit protein uS15 (89 aa).

It belongs to the universal ribosomal protein uS15 family. Part of the 30S ribosomal subunit. Forms a bridge to the 50S subunit in the 70S ribosome, contacting the 23S rRNA.

One of the primary rRNA binding proteins, it binds directly to 16S rRNA where it helps nucleate assembly of the platform of the 30S subunit by binding and bridging several RNA helices of the 16S rRNA. Its function is as follows. Forms an intersubunit bridge (bridge B4) with the 23S rRNA of the 50S subunit in the ribosome. This is Small ribosomal subunit protein uS15 from Syntrophobacter fumaroxidans (strain DSM 10017 / MPOB).